The sequence spans 69 residues: Protein SlyX homolog (69 aa).

Belongs to the SlyX family.

The protein is Protein SlyX homolog of Maricaulis maris (strain MCS10) (Caulobacter maris).